We begin with the raw amino-acid sequence, 301 residues long: Acetyl-coenzyme A carboxylase carboxyl transferase subunit beta (301 aa).

Residues 29–298 form the CoA carboxyltransferase N-terminal domain; sequence LWVKCPETGQ…AEPAEEEAEP (270 aa).

Belongs to the AccD/PCCB family. Acetyl-CoA carboxylase is a heterohexamer composed of biotin carboxyl carrier protein (AccB), biotin carboxylase (AccC) and two subunits each of ACCase subunit alpha (AccA) and ACCase subunit beta (AccD).

The protein resides in the cytoplasm. It catalyses the reaction N(6)-carboxybiotinyl-L-lysyl-[protein] + acetyl-CoA = N(6)-biotinyl-L-lysyl-[protein] + malonyl-CoA. It functions in the pathway lipid metabolism; malonyl-CoA biosynthesis; malonyl-CoA from acetyl-CoA: step 1/1. Component of the acetyl coenzyme A carboxylase (ACC) complex. Biotin carboxylase (BC) catalyzes the carboxylation of biotin on its carrier protein (BCCP) and then the CO(2) group is transferred by the transcarboxylase to acetyl-CoA to form malonyl-CoA. This is Acetyl-coenzyme A carboxylase carboxyl transferase subunit beta from Methylobacterium nodulans (strain LMG 21967 / CNCM I-2342 / ORS 2060).